The following is a 617-amino-acid chain: ATP-dependent zinc metalloprotease FtsH (617 aa).

The Cytoplasmic portion of the chain corresponds to 1–7 (MKIPFDR). A helical transmembrane segment spans residues 8-28 (WLGWPTLLLLLLGLWLLGSSL). Residues 29 to 102 (RDQRTVEAVP…VSYRRVRESN (74 aa)) lie on the Periplasmic side of the membrane. The chain crosses the membrane as a helical span at residues 103-123 (WLSQLLSWMAGPLLLLGFWYF). Residues 124-617 (MSRRIDGQQG…GRPAAIRQVA (494 aa)) lie on the Cytoplasmic side of the membrane. An ATP-binding site is contributed by 198–205 (GPTGTGKT). His421 provides a ligand contact to Zn(2+). The active site involves Glu422. Residues His425 and Asp498 each contribute to the Zn(2+) site.

It in the central section; belongs to the AAA ATPase family. In the C-terminal section; belongs to the peptidase M41 family. As to quaternary structure, homohexamer. Requires Zn(2+) as cofactor.

The protein localises to the cell inner membrane. Its function is as follows. Acts as a processive, ATP-dependent zinc metallopeptidase for both cytoplasmic and membrane proteins. Plays a role in the quality control of integral membrane proteins. The sequence is that of ATP-dependent zinc metalloprotease FtsH from Methylibium petroleiphilum (strain ATCC BAA-1232 / LMG 22953 / PM1).